The sequence spans 545 residues: Probable zinc metalloprotease EGY2, chloroplastic (545 aa).

The transit peptide at 1-63 (MQLPAMSCSP…QIRNRRFVCQ (63 aa)) directs the protein to the chloroplast. A disordered region spans residues 66 to 142 (TETEPDGDGN…DATPASDAQE (77 aa)). Residues 68–85 (TEPDGDGNGDEEKEELGD) show a composition bias toward acidic residues. 2 stretches are compositionally biased toward polar residues: residues 88-109 (SSPS…TNAD) and 117-129 (NTEP…TVQN). Transmembrane regions (helical) follow at residues 256-276 (AVPE…TLLL), 300-320 (VYGA…HILA), 325-345 (GIKL…FGAI), 363-383 (AAGP…GFIL), 426-446 (PLVL…IPAG), 473-493 (LLGI…LIFF), and 513-533 (YISI…PYPF).

It belongs to the peptidase M50B family.

The protein localises to the plastid. It is found in the chloroplast membrane. Functionally, probable membrane-associated metalloprotease that may be involved in chloroplast development. In Oryza sativa subsp. indica (Rice), this protein is Probable zinc metalloprotease EGY2, chloroplastic (EGY2).